The primary structure comprises 30 residues: MTKKITIIGAGNVGATAAXXAASKDLGDIV.

Residue 9-14 (GAGNVG) coordinates NAD(+).

Belongs to the LDH/MDH superfamily. MDH type 3 family.

The catalysed reaction is (S)-malate + NAD(+) = oxaloacetate + NADH + H(+). Its function is as follows. Catalyzes the reversible oxidation of malate to oxaloacetate. The sequence is that of Malate dehydrogenase (mdh) from Heliomicrobium gestii (Heliobacterium gestii).